A 143-amino-acid chain; its full sequence is Transcriptional regulator MraZ (143 aa).

2 SpoVT-AbrB domains span residues 5-47 (TYTP…PRSE) and 76-119 (TDEQ…DAQA).

This sequence belongs to the MraZ family. As to quaternary structure, forms oligomers.

The protein resides in the cytoplasm. Its subcellular location is the nucleoid. The sequence is that of Transcriptional regulator MraZ from Mycobacterium ulcerans (strain Agy99).